Consider the following 57-residue polypeptide: Ribulose bisphosphate carboxylase large chain (57 aa).

A propeptide spanning residues 1–2 is cleaved from the precursor; sequence MS. Proline 3 bears the N-acetylproline mark. Lysine 14 is modified (N6,N6,N6-trimethyllysine).

Belongs to the RuBisCO large chain family. Type I subfamily. As to quaternary structure, heterohexadecamer of 8 large chains and 8 small chains.

It localises to the plastid. The protein resides in the chloroplast. It catalyses the reaction 2 (2R)-3-phosphoglycerate + 2 H(+) = D-ribulose 1,5-bisphosphate + CO2 + H2O. It carries out the reaction D-ribulose 1,5-bisphosphate + O2 = 2-phosphoglycolate + (2R)-3-phosphoglycerate + 2 H(+). RuBisCO catalyzes two reactions: the carboxylation of D-ribulose 1,5-bisphosphate, the primary event in carbon dioxide fixation, as well as the oxidative fragmentation of the pentose substrate in the photorespiration process. Both reactions occur simultaneously and in competition at the same active site. The sequence is that of Ribulose bisphosphate carboxylase large chain (rbcL) from Buxus sempervirens (Common box).